The chain runs to 251 residues: Imidazole glycerol phosphate synthase subunit HisF (251 aa).

Residues Asp-11 and Asp-130 contribute to the active site.

The protein belongs to the HisA/HisF family. In terms of assembly, heterodimer of HisH and HisF.

It is found in the cytoplasm. The enzyme catalyses 5-[(5-phospho-1-deoxy-D-ribulos-1-ylimino)methylamino]-1-(5-phospho-beta-D-ribosyl)imidazole-4-carboxamide + L-glutamine = D-erythro-1-(imidazol-4-yl)glycerol 3-phosphate + 5-amino-1-(5-phospho-beta-D-ribosyl)imidazole-4-carboxamide + L-glutamate + H(+). It participates in amino-acid biosynthesis; L-histidine biosynthesis; L-histidine from 5-phospho-alpha-D-ribose 1-diphosphate: step 5/9. IGPS catalyzes the conversion of PRFAR and glutamine to IGP, AICAR and glutamate. The HisF subunit catalyzes the cyclization activity that produces IGP and AICAR from PRFAR using the ammonia provided by the HisH subunit. This is Imidazole glycerol phosphate synthase subunit HisF from Pelodictyon phaeoclathratiforme (strain DSM 5477 / BU-1).